A 232-amino-acid polypeptide reads, in one-letter code: MTVQQRRRLPIASRETLQALLSEGAQALGVALSDAQRGALLDYVALLAKWNAVYNLTAIRDPRQMLIQHILDSLSIVPHLGAHGAAAAALDVGSGGGLPGVVLAIALPGWRVTLNDIVHKKSAFQNQAKAELKLGNLSVVTGRVETLRSGADVPAKFDVIVSRAFADLADFVTLARHLVAPGGSIWAMKGVRPDEEIGRLPDGACVKQMIRLTVPSLDAERHLIEVELDEAI.

Residues G93, L98, 144-145 (VE), and R163 contribute to the S-adenosyl-L-methionine site.

It belongs to the methyltransferase superfamily. RNA methyltransferase RsmG family.

Its subcellular location is the cytoplasm. The catalysed reaction is guanosine(527) in 16S rRNA + S-adenosyl-L-methionine = N(7)-methylguanosine(527) in 16S rRNA + S-adenosyl-L-homocysteine. Its function is as follows. Specifically methylates the N7 position of guanine in position 527 of 16S rRNA. This Burkholderia pseudomallei (strain 668) protein is Ribosomal RNA small subunit methyltransferase G.